The sequence spans 158 residues: PRA1 family protein 2 (158 aa).

The next 4 helical transmembrane spans lie at 36–58 (NLNF…TLFT), 62–79 (LLVA…LFFV), 88–108 (FAVL…VIVI), and 113–133 (GLTL…HSAL).

This sequence belongs to the PRA1 family.

The protein localises to the membrane. Functionally, may act as a general Rab protein regulator. This Dictyostelium discoideum (Social amoeba) protein is PRA1 family protein 2 (prafB).